Consider the following 94-residue polypeptide: Co-chaperonin GroES (94 aa).

This sequence belongs to the GroES chaperonin family. As to quaternary structure, heptamer of 7 subunits arranged in a ring. Interacts with the chaperonin GroEL.

Its subcellular location is the cytoplasm. In terms of biological role, together with the chaperonin GroEL, plays an essential role in assisting protein folding. The GroEL-GroES system forms a nano-cage that allows encapsulation of the non-native substrate proteins and provides a physical environment optimized to promote and accelerate protein folding. GroES binds to the apical surface of the GroEL ring, thereby capping the opening of the GroEL channel. This Enterococcus faecalis (strain ATCC 700802 / V583) protein is Co-chaperonin GroES.